The primary structure comprises 365 residues: Histidinol-phosphate aminotransferase (365 aa).

At Lys-223 the chain carries N6-(pyridoxal phosphate)lysine.

It belongs to the class-II pyridoxal-phosphate-dependent aminotransferase family. Histidinol-phosphate aminotransferase subfamily. Homodimer. The cofactor is pyridoxal 5'-phosphate.

The enzyme catalyses L-histidinol phosphate + 2-oxoglutarate = 3-(imidazol-4-yl)-2-oxopropyl phosphate + L-glutamate. The protein operates within amino-acid biosynthesis; L-histidine biosynthesis; L-histidine from 5-phospho-alpha-D-ribose 1-diphosphate: step 7/9. This is Histidinol-phosphate aminotransferase from Bacillus pumilus (strain SAFR-032).